A 248-amino-acid polypeptide reads, in one-letter code: UPF0246 protein A1G_03985 (248 aa).

This sequence belongs to the UPF0246 family.

This is UPF0246 protein A1G_03985 from Rickettsia rickettsii (strain Sheila Smith).